Reading from the N-terminus, the 140-residue chain is Nucleoside diphosphate kinase (140 aa).

6 residues coordinate ATP: Lys11, Phe59, Arg87, Thr93, Arg104, and Asn114. His117 acts as the Pros-phosphohistidine intermediate in catalysis.

Belongs to the NDK family. As to quaternary structure, homotetramer. Mg(2+) is required as a cofactor.

The protein localises to the cytoplasm. The enzyme catalyses a 2'-deoxyribonucleoside 5'-diphosphate + ATP = a 2'-deoxyribonucleoside 5'-triphosphate + ADP. It catalyses the reaction a ribonucleoside 5'-diphosphate + ATP = a ribonucleoside 5'-triphosphate + ADP. Major role in the synthesis of nucleoside triphosphates other than ATP. The ATP gamma phosphate is transferred to the NDP beta phosphate via a ping-pong mechanism, using a phosphorylated active-site intermediate. The polypeptide is Nucleoside diphosphate kinase (Rhodopseudomonas palustris (strain HaA2)).